The following is a 540-amino-acid chain: MLO protein homolog 1 (540 aa).

Over 1 to 16 (MAGGRSGSRELPETPT) the chain is Extracellular. Residues 17–37 (WAVAVVCAVLVLVSAAMEHGL) traverse the membrane as a helical segment. Residues 38 to 60 (HNLSHWFRRRQKKAMGDALDKIK) are Cytoplasmic-facing. The chain crosses the membrane as a helical span at residues 61–81 (AELMLLGFISLLLTVAQAPIS). The Extracellular segment spans residues 82–142 (KICIPKSAAN…MSAKSMHQLH (61 aa)). A helical membrane pass occupies residues 143 to 163 (IFIFVLAVFHVTYCIITMGLG). At 164–265 (RLKMKKWKKW…IKRSLEDDFK (102 aa)) the chain is on the cytoplasmic side. The chain crosses the membrane as a helical span at residues 266–286 (VVVGISLPLWFVGILVLFLDI). A topological domain (extracellular) is located at residue His287. A helical transmembrane segment spans residues 288–308 (GLGTLIWISFVPLIIVLLVGT). The Cytoplasmic portion of the chain corresponds to 309-347 (KLEMVIMEMAQEIQDRATVIQGAPMVEPSNKYFWFNRPD). Residues 348 to 368 (WVLFFIHLTLFHNAFQMAHFV) form a helical membrane-spanning segment. Topologically, residues 369–383 (WTMATPGLKKCFHEN) are extracellular. Residues 384-404 (IWLSIVEVIVGISLQVLCSYI) traverse the membrane as a helical segment. Residues 405–540 (TFPLYALVTQ…DSDFSFSAQR (136 aa)) lie on the Cytoplasmic side of the membrane. The interval 426–447 (EQTMKALMNWRKKAMEKKKVRD) is calmodulin-binding. The disordered stretch occupies residues 468 to 526 (ASPVHLLQDHRARSDDPPSPITVASPPAPEEDMYPVPAAAASRQLLDDPPDRRWMASSS). 2 stretches are compositionally biased toward basic and acidic residues: residues 474 to 483 (LQDHRARSDD) and 512 to 521 (LLDDPPDRRW).

The protein belongs to the MLO family.

The protein localises to the membrane. May be involved in modulation of pathogen defense and leaf cell death. Activity seems to be regulated by Ca(2+)-dependent calmodulin binding and seems not to require heterotrimeric G proteins. The polypeptide is MLO protein homolog 1 (MLO1) (Oryza sativa subsp. indica (Rice)).